A 252-amino-acid chain; its full sequence is MDNWLKQEIWSKTQHQDITSDDCLLLSTDWVEFLQMSQFLKQKLLQLLNCIKEKRKKAVIYPPDNKIMFWSYCCAPRDIKVVILGQDPYHGGQGTGLAFSVSYEHSIPPSLKNIFFELQRSDPLFHAPNHGCLNSWATQGVLLLNTVLTVEKGKAYSHSDLGWQWFTNYIISSVSEKLSNCVFMLWGTKAIEKSILIDSSKHLVLKAQHPSPLAAASQRVGTWPKFIGCDHFNQANKYLEEHKKKPISWALL.

Asp87 acts as the Proton acceptor in catalysis.

Belongs to the uracil-DNA glycosylase (UDG) superfamily. UNG family.

The protein resides in the host nucleus. It catalyses the reaction Hydrolyzes single-stranded DNA or mismatched double-stranded DNA and polynucleotides, releasing free uracil.. In terms of biological role, excises uracil residues from the DNA which can arise as a result of misincorporation of dUMP residues by DNA polymerase or deamination of cytosines. Therefore may reduce deleterious uracil incorporation into the viral genome, particularly in terminally differentiated cells which lack DNA repair enzymes. The protein is Uracil-DNA glycosylase (46) of Saimiri sciureus (Common squirrel monkey).